The primary structure comprises 156 residues: AP-1 complex subunit sigma-1 (156 aa).

Belongs to the adaptor complexes small subunit family. In terms of assembly, adaptor protein complex 1 (AP-1) is a heterotetramer composed of two large adaptins (gamma-type subunit and beta-type subunit), a medium adaptin (mu-type subunit) and a small adaptin (sigma-type subunit).

The protein localises to the golgi apparatus. The protein resides in the trans-Golgi network. It localises to the cytoplasmic vesicle. It is found in the clathrin-coated vesicle membrane. Subunit of clathrin-associated adaptor protein complex 1 that plays a role in protein sorting in the trans-Golgi network (TGN) and endosomes. The AP complexes mediate the recruitment of clathrin to membranes and the recognition of sorting signals within the cytosolic tails of transmembrane cargo molecules. Also involved in early steps of phagocytosis and macropinocytosis. The chain is AP-1 complex subunit sigma-1 (ap1s1) from Dictyostelium discoideum (Social amoeba).